The chain runs to 439 residues: Glutamate-1-semialdehyde 2,1-aminomutase (439 aa).

The residue at position 273 (Lys-273) is an N6-(pyridoxal phosphate)lysine.

This sequence belongs to the class-III pyridoxal-phosphate-dependent aminotransferase family. HemL subfamily. Homodimer. Requires pyridoxal 5'-phosphate as cofactor.

The protein localises to the cytoplasm. The catalysed reaction is (S)-4-amino-5-oxopentanoate = 5-aminolevulinate. It functions in the pathway porphyrin-containing compound metabolism; protoporphyrin-IX biosynthesis; 5-aminolevulinate from L-glutamyl-tRNA(Glu): step 2/2. This is Glutamate-1-semialdehyde 2,1-aminomutase from Paenarthrobacter aurescens (strain TC1).